The sequence spans 370 residues: Peptidyl-prolyl cis-trans isomerase D (370 aa).

The residue at position 5 (Ser-5) is a Phosphoserine. In terms of domain architecture, PPIase cyclophilin-type spans 19–183 (FFDVDIGGER…KLCVIAECGE (165 aa)). The residue at position 171 (Lys-171) is an N6-acetyllysine. The chaperone activity stretch occupies residues 185–215 (KEGDDGGIFPKDGSGDSHPDFPEDADIDLKD). Ser-198 is subject to Phosphoserine. The interval 214 to 370 (KDVDKILLIT…EKAVYAKMFA (157 aa)) is interaction with HSP90AB1. TPR repeat units lie at residues 223 to 256 (TEDLKNIGNTFFKSQNWEMAIKKYAEVLRYVDSS), 273 to 306 (LSCVLNIGACKLKMSNWQGAIDSCLEALELDPSN), and 307 to 340 (TKALYRRAQGWQGLKEYDQALADLKKAQGIAPED).

This sequence belongs to the cyclophilin-type PPIase family. PPIase D subfamily. Identified in ESR1 or NR3C1/GCR steroid receptor-chaperone complexes. Found in HSP90 chaperone complexes with kinase clients LCK or EIF2AK1. Two monomers associate with one HSP90 homodimer. Interacts with HSP90AA1. Interacts with HSP90AB1; PPID and FKBP4 compete for binding to HSP90AB1 and the interaction is mutually exclusive with the PPID:HSPA8 interaction. Interacts with HSPA8; PPID and STIP1 but not FKBP4 compete for binding to HSPA8 and the interaction is mutually exclusive with the PPID:HSP90AB1 interaction. Interacts with S100A1 and S100A2; the interactions dissociate the PPID:HSP90AA1 interaction. Interacts with S100A6. Interacts with MYB, ILF2, XRCC6, RACK1 and RPS3. Interacts with cytoplasmic dynein 1 intermediate chain (DYNC1I1 or DYNC1I2). In terms of tissue distribution, widely expressed.

It localises to the cytoplasm. Its subcellular location is the nucleus. It is found in the nucleolus. The protein resides in the nucleoplasm. It carries out the reaction [protein]-peptidylproline (omega=180) = [protein]-peptidylproline (omega=0). With respect to regulation, less sensitive to inhibition by cyclosporin A than is CYP-18. Its function is as follows. PPIase that catalyzes the cis-trans isomerization of proline imidic peptide bonds in oligopeptides and may therefore assist protein folding. Proposed to act as a co-chaperone in HSP90 complexes such as in unligated steroid receptors heterocomplexes. Different co-chaperones seem to compete for association with HSP90 thus establishing distinct HSP90-co-chaperone-receptor complexes with the potential to exert tissue-specific receptor activity control. May have a preference for estrogen receptor complexes and is not found in glucocorticoid receptor complexes. May be involved in cytoplasmic dynein-dependent movement of the receptor from the cytoplasm to the nucleus. May regulate MYB by inhibiting its DNA-binding activity. Involved in regulation of AHR signaling by promoting the formation of the AHR:ARNT dimer; the function is independent of HSP90 but requires the chaperone activity. Involved in regulation of UV radiation-induced apoptosis. Promotes cell viability in anaplastic lymphoma kinase-positive anaplastic large-cell lymphoma (ALK+ ALCL) cell lines. In terms of biological role, (Microbial infection) May be involved in hepatitis C virus (HCV) replication and release. In Homo sapiens (Human), this protein is Peptidyl-prolyl cis-trans isomerase D.